Here is a 221-residue protein sequence, read N- to C-terminus: Small ribosomal subunit protein uS5 (221 aa).

The segment at 1–40 (MMAQRNSGAPDNAGGSNDGREGGRGRRDNRDDRRGGRDNA) is disordered. Basic and acidic residues predominate over residues 18 to 40 (DGREGGRGRRDNRDDRRGGRDNA). Positions 45-108 (YLERVVTINR…DEARKNFFRV (64 aa)) constitute an S5 DRBM domain.

It belongs to the universal ribosomal protein uS5 family. In terms of assembly, part of the 30S ribosomal subunit. Contacts proteins S4 and S8.

Its function is as follows. With S4 and S12 plays an important role in translational accuracy. Functionally, located at the back of the 30S subunit body where it stabilizes the conformation of the head with respect to the body. The protein is Small ribosomal subunit protein uS5 of Mycobacteroides abscessus (strain ATCC 19977 / DSM 44196 / CCUG 20993 / CIP 104536 / JCM 13569 / NCTC 13031 / TMC 1543 / L948) (Mycobacterium abscessus).